We begin with the raw amino-acid sequence, 807 residues long: Carbamoyltransferase HypF2 (807 aa).

The Acylphosphatase-like domain occupies 14 to 101 (RIRIRVRGVV…VDADGFAILE (88 aa)). C4-type zinc fingers lie at residues 120–145 (CPDC…CTQC) and 170–195 (CRPC…CPDC). Residues 212–415 (VDPIAETVAR…HVQFIRRARG (204 aa)) enclose the YrdC-like domain. Positions 663–682 (WGEQPSPGRPKTVAHSLGGV) are disordered.

This sequence belongs to the carbamoyltransferase HypF family.

It carries out the reaction C-terminal L-cysteinyl-[HypE protein] + carbamoyl phosphate + ATP + H2O = C-terminal S-carboxamide-L-cysteinyl-[HypE protein] + AMP + phosphate + diphosphate + H(+). Its pathway is protein modification; [NiFe] hydrogenase maturation. In terms of biological role, involved in the maturation of [NiFe] hydrogenases. Along with HypE, it catalyzes the synthesis of the CN ligands of the active site iron of [NiFe]-hydrogenases. HypF functions as a carbamoyl transferase using carbamoylphosphate as a substrate and transferring the carboxamido moiety in an ATP-dependent reaction to the thiolate of the C-terminal cysteine of HypE yielding a protein-S-carboxamide. The chain is Carbamoyltransferase HypF2 (hypF2) from Cupriavidus necator (strain ATCC 17699 / DSM 428 / KCTC 22496 / NCIMB 10442 / H16 / Stanier 337) (Ralstonia eutropha).